The primary structure comprises 411 residues: Arginine deiminase (411 aa).

Catalysis depends on Cys401, which acts as the Amidino-cysteine intermediate.

Belongs to the arginine deiminase family.

It is found in the cytoplasm. The catalysed reaction is L-arginine + H2O = L-citrulline + NH4(+). The protein operates within amino-acid degradation; L-arginine degradation via ADI pathway; carbamoyl phosphate from L-arginine: step 1/2. This chain is Arginine deiminase, found in Staphylococcus haemolyticus (strain JCSC1435).